The sequence spans 177 residues: Translationally-controlled tumor protein homolog (177 aa).

Residues 1–177 (MIIYRDLFSG…IKQGLVVEKC (177 aa)) form the TCTP domain.

The protein belongs to the TCTP family.

It localises to the cytoplasm. In terms of biological role, involved in calcium binding and microtubule stabilization. The chain is Translationally-controlled tumor protein homolog from Trichinella pseudospiralis (Parasitic roundworm).